Consider the following 787-residue polypeptide: Longitudinals lacking protein, isoforms A/B/D/L (787 aa).

The BTB domain maps to 32–97 (VDCTLAAEGK…MYRGEVNISQ (66 aa)). Disordered regions lie at residues 115-200 (LSDN…SSVL), 228-340 (SSGP…ASAS), 506-560 (AKDV…SGGK), and 653-677 (TTGS…SVLG). Low complexity-rich tracts occupy residues 162 to 175 (SGDV…SSSP), 228 to 251 (SSGP…LTST), 263 to 293 (TSST…QTTS), 329 to 340 (NSATGPNPASAS), 537 to 560 (HSSS…SGGK), and 659 to 668 (SPSNSGHNNS). The C2H2-type 1; degenerate zinc finger occupies 685-707 (HPCPVCGRVYKLKSSLRNHQKWE). The segment at 714–737 (FQCPFCVYRAKQKMHIGRHMERMH) adopts a C2H2-type 2 zinc-finger fold.

Isoform D interacts with JIL-1. By stage 11, isoform B is expressed throughout the mesoderm, whereas isoform A, isoform D and isoform L are expressed throughout the ectoderm. Expression becomes restricted during later stages; starting from stage 14 to 16, isoform B is expressed in muscle. Isoform A, isoform D, and at low levels isoform B, are expressed in the CNS. Expression is also seen in specific types of cells in the embryo; isoform A and isoform L are expressed in a dynamic pattern in the ventral neurogenic region starting at stage 7. Isoform L is expressed around the tracheal pits at stage 11.

Its subcellular location is the nucleus. Functionally, putative transcription factor required for axon growth and guidance in the central and peripheral nervous systems. Repels CNS axons away from the midline by promoting the expression of the midline repellent sli and its receptor robo. In Drosophila melanogaster (Fruit fly), this protein is Longitudinals lacking protein, isoforms A/B/D/L.